The sequence spans 180 residues: ATP-dependent protease subunit HslV (180 aa).

The active site involves T5. Na(+) contacts are provided by G165, C168, and T171.

It belongs to the peptidase T1B family. HslV subfamily. As to quaternary structure, a double ring-shaped homohexamer of HslV is capped on each side by a ring-shaped HslU homohexamer. The assembly of the HslU/HslV complex is dependent on binding of ATP.

It is found in the cytoplasm. It carries out the reaction ATP-dependent cleavage of peptide bonds with broad specificity.. With respect to regulation, allosterically activated by HslU binding. Functionally, protease subunit of a proteasome-like degradation complex believed to be a general protein degrading machinery. The chain is ATP-dependent protease subunit HslV from Helicobacter hepaticus (strain ATCC 51449 / 3B1).